An 85-amino-acid polypeptide reads, in one-letter code: Exodeoxyribonuclease 7 small subunit (85 aa).

Residues Ser66 to Glu85 form a disordered region. Acidic residues predominate over residues Glu68 to Glu85.

This sequence belongs to the XseB family. Heterooligomer composed of large and small subunits.

The protein resides in the cytoplasm. It carries out the reaction Exonucleolytic cleavage in either 5'- to 3'- or 3'- to 5'-direction to yield nucleoside 5'-phosphates.. In terms of biological role, bidirectionally degrades single-stranded DNA into large acid-insoluble oligonucleotides, which are then degraded further into small acid-soluble oligonucleotides. The sequence is that of Exodeoxyribonuclease 7 small subunit from Thioalkalivibrio sulfidiphilus (strain HL-EbGR7).